A 505-amino-acid chain; its full sequence is Trans-cinnamate 4-monooxygenase (505 aa).

A helical transmembrane segment spans residues Leu3–Val23. (E)-cinnamate contacts are provided by residues Arg213–Gln218 and Ala306. Residue Cys447 participates in heme binding.

Belongs to the cytochrome P450 family. The cofactor is heme.

It localises to the membrane. The catalysed reaction is (E)-cinnamate + reduced [NADPH--hemoprotein reductase] + O2 = (E)-4-coumarate + oxidized [NADPH--hemoprotein reductase] + H2O + H(+). It functions in the pathway phenylpropanoid metabolism; trans-4-coumarate biosynthesis; trans-4-coumarate from trans-cinnamate: step 1/1. Functionally, catalyzes the first oxidative step of the phenylpropanoid pathway in higher plants by transforming trans-cinnamate into p-coumarate. The compounds formed by this pathway are essential components for lignification, pollination, and defense against ultraviolet light, predators and pathogens. The chain is Trans-cinnamate 4-monooxygenase (CYP73A4) from Catharanthus roseus (Madagascar periwinkle).